Reading from the N-terminus, the 390-residue chain is Tuftelin (390 aa).

Coiled coils occupy residues 88-126 (DKMTHEKNIDQLKSEVQYIQEARNCLQKLREDISSKLDR) and 163-352 (PSMS…EKQV). The segment at 356-383 (NFSTQARAKTENLGSVRISKPPSPKPMP) is disordered.

It belongs to the tuftelin family. Interacts with TFIP11. May form oligomers. Ameloblasts, and also non-odontogenic tissues including kidney, lung, liver and testis.

It is found in the secreted. In terms of biological role, involved in the structural organization of the epidermis. Involved in the mineralization and structural organization of enamel. The sequence is that of Tuftelin (Tuft1) from Mus musculus (Mouse).